Reading from the N-terminus, the 459-residue chain is Ribulose bisphosphate carboxylase large chain (459 aa).

At Lys4 the chain carries N6,N6,N6-trimethyllysine. Substrate is bound by residues Asn113 and Thr163. Lys165 (proton acceptor) is an active-site residue. Lys167 lines the substrate pocket. Residues Lys191, Asp193, and Glu194 each coordinate Mg(2+). Lys191 carries the post-translational modification N6-carboxylysine. His284 functions as the Proton acceptor in the catalytic mechanism. Substrate contacts are provided by Arg285, His317, and Ser369.

The protein belongs to the RuBisCO large chain family. Type I subfamily. As to quaternary structure, heterohexadecamer of 8 large chains and 8 small chains; disulfide-linked. The disulfide link is formed within the large subunit homodimers. It depends on Mg(2+) as a cofactor. Post-translationally, the disulfide bond which can form in the large chain dimeric partners within the hexadecamer appears to be associated with oxidative stress and protein turnover.

It localises to the plastid. The protein localises to the chloroplast. The enzyme catalyses 2 (2R)-3-phosphoglycerate + 2 H(+) = D-ribulose 1,5-bisphosphate + CO2 + H2O. It carries out the reaction D-ribulose 1,5-bisphosphate + O2 = 2-phosphoglycolate + (2R)-3-phosphoglycerate + 2 H(+). RuBisCO catalyzes two reactions: the carboxylation of D-ribulose 1,5-bisphosphate, the primary event in carbon dioxide fixation, as well as the oxidative fragmentation of the pentose substrate in the photorespiration process. Both reactions occur simultaneously and in competition at the same active site. This chain is Ribulose bisphosphate carboxylase large chain, found in Garrya elliptica (Wavyleaf silktassel).